The primary structure comprises 130 residues: Small ribosomal subunit protein uS9 (130 aa).

This sequence belongs to the universal ribosomal protein uS9 family.

In Edwardsiella ictaluri (strain 93-146), this protein is Small ribosomal subunit protein uS9.